A 386-amino-acid chain; its full sequence is Putative membrane-bound transacylase BcsY (386 aa).

10 consecutive transmembrane segments (helical) span residues 37–57 (LAIA…FIGV), 91–111 (LLPA…WWVL), 118–138 (IALN…SGHV), 156–176 (LSLE…LPLT), 181–201 (LVLS…WHTG), 237–257 (AVYA…PLSY), 258–278 (ACPS…IMLP), 290–310 (LSPL…GIVV), 322–342 (AMMA…YVLV), and 362–382 (AALL…ISHV).

This sequence belongs to the acyltransferase 3 family.

It localises to the cell inner membrane. It participates in glycan metabolism; bacterial cellulose biosynthesis. Functionally, may acylate a glucose moiety into cellulose fibrils, in cooperation with BcsABII and BcsCII. The sequence is that of Putative membrane-bound transacylase BcsY (bcsY) from Komagataeibacter xylinus (Gluconacetobacter xylinus).